An 89-amino-acid chain; its full sequence is uncharacterized protein (89 aa).

Residues 39 to 61 (FVCFWSIWFWTGDISFSLLSMLV) traverse the membrane as a helical segment.

It localises to the membrane. This is an uncharacterized protein from Saccharomyces cerevisiae (strain ATCC 204508 / S288c) (Baker's yeast).